Here is a 188-residue protein sequence, read N- to C-terminus: ATP synthase subunit b 2 (188 aa).

A helical membrane pass occupies residues Phe41–Pro61.

It belongs to the ATPase B chain family. F-type ATPases have 2 components, F(1) - the catalytic core - and F(0) - the membrane proton channel. F(1) has five subunits: alpha(3), beta(3), gamma(1), delta(1), epsilon(1). F(0) has three main subunits: a(1), b(2) and c(10-14). The alpha and beta chains form an alternating ring which encloses part of the gamma chain. F(1) is attached to F(0) by a central stalk formed by the gamma and epsilon chains, while a peripheral stalk is formed by the delta and b chains.

It localises to the cell inner membrane. Its function is as follows. F(1)F(0) ATP synthase produces ATP from ADP in the presence of a proton or sodium gradient. F-type ATPases consist of two structural domains, F(1) containing the extramembraneous catalytic core and F(0) containing the membrane proton channel, linked together by a central stalk and a peripheral stalk. During catalysis, ATP synthesis in the catalytic domain of F(1) is coupled via a rotary mechanism of the central stalk subunits to proton translocation. In terms of biological role, component of the F(0) channel, it forms part of the peripheral stalk, linking F(1) to F(0). The b'-subunit is a diverged and duplicated form of b found in plants and photosynthetic bacteria. This chain is ATP synthase subunit b 2 (atpF2), found in Bartonella bacilliformis (strain ATCC 35685 / KC583 / Herrer 020/F12,63).